The sequence spans 35 residues: Anti-H(O) lectin 3 (35 aa).

Belongs to the leguminous lectin family. In terms of assembly, homodimer. In terms of processing, highly glycosylated.

In terms of biological role, binds lactose or galactose. This is Anti-H(O) lectin 3 from Ulex europaeus (Furze).